A 492-amino-acid polypeptide reads, in one-letter code: Bifunctional purine biosynthesis protein PurH (492 aa).

The MGS-like domain occupies 1–144 (MKKAILSVSN…KNYKHVTTIV (144 aa)).

Belongs to the PurH family.

The enzyme catalyses (6R)-10-formyltetrahydrofolate + 5-amino-1-(5-phospho-beta-D-ribosyl)imidazole-4-carboxamide = 5-formamido-1-(5-phospho-D-ribosyl)imidazole-4-carboxamide + (6S)-5,6,7,8-tetrahydrofolate. It carries out the reaction IMP + H2O = 5-formamido-1-(5-phospho-D-ribosyl)imidazole-4-carboxamide. Its pathway is purine metabolism; IMP biosynthesis via de novo pathway; 5-formamido-1-(5-phospho-D-ribosyl)imidazole-4-carboxamide from 5-amino-1-(5-phospho-D-ribosyl)imidazole-4-carboxamide (10-formyl THF route): step 1/1. It participates in purine metabolism; IMP biosynthesis via de novo pathway; IMP from 5-formamido-1-(5-phospho-D-ribosyl)imidazole-4-carboxamide: step 1/1. This is Bifunctional purine biosynthesis protein PurH from Staphylococcus aureus (strain JH1).